Here is a 191-residue protein sequence, read N- to C-terminus: Cyclin-dependent kinase inhibitor 1 (191 aa).

A disordered region spans residues 62 to 81 (LIHLEEEDKDGDTETSTYRR). Positions 162-191 (QLKEKFKKKYNFDFEKEKPLEGRYEWVKLE) are required for inhibitory function and interaction with CDK kinase complexes.

It belongs to the CDI family. ICK/KRP subfamily. Specifically interacts with CDKA-1, but not with CDKB1-1. Interacts with CYCD2-1 and CYCD3-1. Ubiquitinated independently by RKP and SCF (SKP1-CUL1-FBL5/SKP2B) protein ligase complex, leading to proteasomal degradation. Expressed at low levels in roots, stems, leaves and flowers.

Its subcellular location is the nucleus. It localises to the nucleoplasm. Its function is as follows. Binds and inhibits CYCD2-1/CDKA-1 kinase complex activity. Regulates cell division which is crucial for plant growth, development and morphogenesis. Functions in turning cells from a mitotic to an endoreplicating cell cycle mode. Acts cell- and non-cell-autonomously to regulate endoreduplication by allowing S phase progression, but blocking entry into mitosis. Keeps on the one hand the plant cell cycle locally controlled, and on the other hand provides a possibility of linking cell cycle control in single cells with the supracellular organization of a tissue or an organ. May target specifically CDKA-1. In Arabidopsis thaliana (Mouse-ear cress), this protein is Cyclin-dependent kinase inhibitor 1 (KRP1).